The following is a 234-amino-acid chain: Peptidase E (234 aa).

Catalysis depends on charge relay system residues Ser123, Asp138, and His160.

It belongs to the peptidase S51 family.

It localises to the cytoplasm. It carries out the reaction Dipeptidase E catalyzes the hydrolysis of dipeptides Asp-|-Xaa. It does not act on peptides with N-terminal Glu, Asn or Gln, nor does it cleave isoaspartyl peptides.. In terms of biological role, hydrolyzes dipeptides containing N-terminal aspartate residues. May play a role in allowing the cell to use peptide aspartate to spare carbon otherwise required for the synthesis of the aspartate family of amino acids. The chain is Peptidase E from Actinobacillus pleuropneumoniae serotype 7 (strain AP76).